We begin with the raw amino-acid sequence, 62 residues long: Conotoxin Pn-014 (62 aa).

The first 22 residues, 1–22, serve as a signal peptide directing secretion; it reads MRCLPVFVILLLLIASAPSVDA. A propeptide spanning residues 23–48 is cleaved from the precursor; sequence RPKTKDDIPLVSFQDHAKRILQTFES. Tryptophan 61 carries the tryptophan amide modification.

Belongs to the conotoxin T superfamily. Contains 2 disulfide bonds that can be either 'C1-C3, C2-C4' or 'C1-C4, C2-C3', since these disulfide connectivities have been observed for conotoxins with cysteine framework V (for examples, see AC P0DQQ7 and AC P81755). In terms of tissue distribution, expressed by the venom duct.

The protein resides in the secreted. The polypeptide is Conotoxin Pn-014 (Conus pennaceus (Feathered cone)).